The chain runs to 430 residues: Adenylosuccinate synthetase (430 aa).

GTP-binding positions include 13–19 (GDEGKGK) and 41–43 (GHT). D14 serves as the catalytic Proton acceptor. Residues D14 and G41 each contribute to the Mg(2+) site. IMP-binding positions include 14–17 (DEGK), 39–42 (NAGH), T130, R144, Q225, T240, and R304. Residue H42 is the Proton donor of the active site. 300–306 (ASTGRPR) lines the substrate pocket. Residues R306, 332-334 (KLD), and 414-416 (STG) contribute to the GTP site.

Belongs to the adenylosuccinate synthetase family. As to quaternary structure, homodimer. The cofactor is Mg(2+).

It localises to the cytoplasm. The catalysed reaction is IMP + L-aspartate + GTP = N(6)-(1,2-dicarboxyethyl)-AMP + GDP + phosphate + 2 H(+). It participates in purine metabolism; AMP biosynthesis via de novo pathway; AMP from IMP: step 1/2. Plays an important role in the de novo pathway of purine nucleotide biosynthesis. Catalyzes the first committed step in the biosynthesis of AMP from IMP. This chain is Adenylosuccinate synthetase, found in Xylella fastidiosa (strain M23).